The sequence spans 273 residues: Soluble P-type ATPase-like phosphatase (273 aa).

The active-site 4-aspartylphosphate intermediate is the aspartate 8.

This sequence belongs to the cation transport ATPase (P-type) (TC 3.A.3) family. Type IB subfamily. Mg(2+) is required as a cofactor.

Inhibited by orthovanadate. Functionally, most probably acts as a phosphatase in the cytosol. This is Soluble P-type ATPase-like phosphatase (patS) from Methanocaldococcus jannaschii (strain ATCC 43067 / DSM 2661 / JAL-1 / JCM 10045 / NBRC 100440) (Methanococcus jannaschii).